The primary structure comprises 521 residues: NAD(P)H-quinone oxidoreductase subunit 2 (521 aa).

Helical transmembrane passes span Ile15–Phe35, Trp42–Trp62, Leu79–Val99, Ile109–Leu126, Glu131–Met153, Leu167–Leu187, Leu208–Val228, Pro242–Ile262, Trp276–Ile296, Met304–Thr324, Val332–Phe352, Leu376–Gly396, Leu398–Ile418, and Val464–Leu484.

It belongs to the complex I subunit 2 family. In terms of assembly, NDH-1 can be composed of about 15 different subunits; different subcomplexes with different compositions have been identified which probably have different functions.

Its subcellular location is the cellular thylakoid membrane. It catalyses the reaction a plastoquinone + NADH + (n+1) H(+)(in) = a plastoquinol + NAD(+) + n H(+)(out). The catalysed reaction is a plastoquinone + NADPH + (n+1) H(+)(in) = a plastoquinol + NADP(+) + n H(+)(out). Functionally, NDH-1 shuttles electrons from an unknown electron donor, via FMN and iron-sulfur (Fe-S) centers, to quinones in the respiratory and/or the photosynthetic chain. The immediate electron acceptor for the enzyme in this species is believed to be plastoquinone. Couples the redox reaction to proton translocation, and thus conserves the redox energy in a proton gradient. Cyanobacterial NDH-1 also plays a role in inorganic carbon-concentration. The polypeptide is NAD(P)H-quinone oxidoreductase subunit 2 (Acaryochloris marina (strain MBIC 11017)).